Consider the following 288-residue polypeptide: Bifunctional protein FolD (288 aa).

Residues 166-168 (GAS) and Ile-232 each bind NADP(+).

This sequence belongs to the tetrahydrofolate dehydrogenase/cyclohydrolase family. Homodimer.

It catalyses the reaction (6R)-5,10-methylene-5,6,7,8-tetrahydrofolate + NADP(+) = (6R)-5,10-methenyltetrahydrofolate + NADPH. It carries out the reaction (6R)-5,10-methenyltetrahydrofolate + H2O = (6R)-10-formyltetrahydrofolate + H(+). It participates in one-carbon metabolism; tetrahydrofolate interconversion. In terms of biological role, catalyzes the oxidation of 5,10-methylenetetrahydrofolate to 5,10-methenyltetrahydrofolate and then the hydrolysis of 5,10-methenyltetrahydrofolate to 10-formyltetrahydrofolate. This Salmonella arizonae (strain ATCC BAA-731 / CDC346-86 / RSK2980) protein is Bifunctional protein FolD.